The primary structure comprises 111 residues: CRIB domain-containing protein RIC2 (111 aa).

Positions 71 to 84 (IGFPTDVKHLSHIG) constitute a CRIB domain.

In terms of assembly, interacts with ARAC11/ROP1. In terms of tissue distribution, expressed in roots, leaves, stems, flowers, siliques and pollen.

The protein localises to the cell membrane. Its function is as follows. Functions as a downstream effector of Rho-related GTP binding proteins of the 'Rho of Plants' (ROPs) family. Participates in the propagation of ROP GTPase signals in specific cellular responses. Is involved in pollen tube growth regulation through its interaction with ARAC11/ROP1. This chain is CRIB domain-containing protein RIC2 (RIC2), found in Arabidopsis thaliana (Mouse-ear cress).